Consider the following 508-residue polypeptide: Photosystem II CP47 reaction center protein (508 aa).

The next 6 membrane-spanning stretches (helical) occupy residues 21–36 (SVHI…WAGS), 101–115 (IMFS…IWHW), 140–156 (GIHL…FGAF), 203–218 (IAAG…FHLS), 237–252 (VLSS…AFVV), and 457–472 (SFAL…HGAR).

It belongs to the PsbB/PsbC family. PsbB subfamily. In terms of assembly, PSII is composed of 1 copy each of membrane proteins PsbA, PsbB, PsbC, PsbD, PsbE, PsbF, PsbH, PsbI, PsbJ, PsbK, PsbL, PsbM, PsbT, PsbX, PsbY, PsbZ, Psb30/Ycf12, at least 3 peripheral proteins of the oxygen-evolving complex and a large number of cofactors. It forms dimeric complexes. Binds multiple chlorophylls. PSII binds additional chlorophylls, carotenoids and specific lipids. serves as cofactor.

It is found in the plastid. The protein localises to the chloroplast thylakoid membrane. Functionally, one of the components of the core complex of photosystem II (PSII). It binds chlorophyll and helps catalyze the primary light-induced photochemical processes of PSII. PSII is a light-driven water:plastoquinone oxidoreductase, using light energy to abstract electrons from H(2)O, generating O(2) and a proton gradient subsequently used for ATP formation. The sequence is that of Photosystem II CP47 reaction center protein from Ceratophyllum demersum (Rigid hornwort).